The sequence spans 148 residues: uncharacterized protein (148 aa).

This is an uncharacterized protein from Saccharomyces cerevisiae (strain ATCC 204508 / S288c) (Baker's yeast).